A 701-amino-acid polypeptide reads, in one-letter code: MTEDGIKWACEYCTFENWPSAIKCTMCRAPRPSGAIITEEPFKNRTPDVGSMEREIGSPLICPDSSARPRVKSSYSMETSSKWSCQICTYLNWPRAIRCTQCLSQRRTRSPTESPQSSGSGLRSIPGPIDPCEEYNDRNKLNIKGQHWTCSACTYENCAKAKKCVVCDHPTPNNMDAIELANTDEASSIINEQDRARWRGGCSSSNSQRRSPPTSKRDSDMDFQRIELAGAVGSKEEFELDLKKLKQIKNRMRKTDWLFLNACVGVVEGDLSAVEAYKTSGGDIARQLSADEVRLLNRPSAFDVGYTLVHLSIRFQRQDMLAILLTEVAQHAAKCIPAMVCPELTEQIRREIAASVHQRKGDFACYFLTDLVTFTLPADIEDLPPTVQEKLFDEVLDRDVQKELEEESPIINWSLELGTRLDSRLYALWNRTAGDCLLDSVLQATWGIYDKDSVLRKALHDSLRDCSHWFYSRWKEWESWYSQSFGLHFSLREEQWQEDWAFILSLASQPGASLEQTHIFVLAHILRRPIIVYGVKYYKSFRGETLGYTRFQGVYLPLLWEQSFCWKSPIALGYTRGHFSALVAMENDGFDNRGAGANLNTDDDVTVTFLPLVDSERKLLHVHFLSAQELGNEDQQEKLLREWMDCCVTEGGVLVAMQKSSRRRNHPLVTQMVEKWLDGYRQIRPCTALSDGEEDEDDEDE.

RanBP2-type zinc fingers lie at residues 3 to 33, 79 to 108, and 143 to 173; these read EDGI…PRPS, TSSK…QRRT, and IKGQ…PTPN. Zn(2+) is bound by residues Cys-10, Cys-13, Cys-24, Cys-27, Cys-85, Cys-88, Cys-99, and Cys-102. Polar residues predominate over residues 108–121; sequence TRSPTESPQSSGSG. A disordered region spans residues 108–129; the sequence is TRSPTESPQSSGSGLRSIPGPI. 4 residues coordinate Zn(2+): Cys-150, Cys-153, Cys-164, and Cys-167. The tract at residues 197–220 is disordered; that stretch reads RWRGGCSSSNSQRRSPPTSKRDSD. Residues 202 to 214 show a composition bias toward polar residues; it reads CSSSNSQRRSPPT. ANK repeat units follow at residues 253 to 283 and 306 to 333; these read RKTD…SGGD and YTLV…QHAA. The region spanning 425-585 is the OTU domain; sequence LYALWNRTAG…RGHFSALVAM (161 aa). The active-site Nucleophile is Cys-436. His-578 functions as the Proton acceptor in the catalytic mechanism.

Belongs to the peptidase C64 family.

It localises to the cytoplasm. The protein localises to the nucleus. The catalysed reaction is Thiol-dependent hydrolysis of ester, thioester, amide, peptide and isopeptide bonds formed by the C-terminal Gly of ubiquitin (a 76-residue protein attached to proteins as an intracellular targeting signal).. In terms of biological role, ubiquitin thioesterase, which specifically hydrolyzes 'Lys-29'-linked and 'Lys-33'-linked diubiquitin. Also cleaves 'Lys-63'-linked chains, but with 40-fold less efficiency compared to 'Lys-29'-linked ones. Positive regulator of the Wnt signaling pathway that deubiquitinates apc protein, a negative regulator of Wnt-mediated transcription. Acts as a regulator of autophagy by mediating deubiquitination of pik3c3/vps34, thereby promoting autophagosome maturation. Plays a role in the regulation of cell morphology and cytoskeletal organization. Required in the stress fiber dynamics and cell migration. The protein is Ubiquitin thioesterase zranb1-B (zranb1-b) of Xenopus laevis (African clawed frog).